The primary structure comprises 432 residues: Adenylosuccinate synthetase (432 aa).

GTP-binding positions include 13-19 and 41-43; these read GDEGKGK and GHT. Asp-14 serves as the catalytic Proton acceptor. 2 residues coordinate Mg(2+): Asp-14 and Gly-41. Residues 14-17, 39-42, Thr-130, Arg-144, Gln-225, Thr-240, and Arg-304 contribute to the IMP site; these read DEGK and NAGH. Residue His-42 is the Proton donor of the active site. 300-306 serves as a coordination point for substrate; that stretch reads AVTGRPR. GTP is bound by residues Arg-306, 332 to 334, and 415 to 417; these read KLD and STG.

It belongs to the adenylosuccinate synthetase family. In terms of assembly, homodimer. The cofactor is Mg(2+).

It localises to the cytoplasm. It catalyses the reaction IMP + L-aspartate + GTP = N(6)-(1,2-dicarboxyethyl)-AMP + GDP + phosphate + 2 H(+). Its pathway is purine metabolism; AMP biosynthesis via de novo pathway; AMP from IMP: step 1/2. Functionally, plays an important role in the de novo pathway of purine nucleotide biosynthesis. Catalyzes the first committed step in the biosynthesis of AMP from IMP. The sequence is that of Adenylosuccinate synthetase from Haemophilus influenzae (strain PittEE).